The following is a 540-amino-acid chain: MKGKLLVIGFGPGSFEHITQRAREAIQESDMIIGYKTYVELIQGLLTNQQIISTGMTEEVSRAQEAVKQAEAGKTVAVISSGDAGVYGMAGLVYEVLIEKGWKKETGVELEVIPGISAINSCASLLGAPVMHDACTISLSDHLTPWELIEKRIEAAAQADFVVAFYNPKSGRRTRQIVEAQRILLKYRSPDTPVGLVKSAYRDREEVVMTNLKDMLNHEIGMLTTVVVGNSSTFFYDDLMITPRGYQRKYTLNQTEQPLRPHQRLRKEAEPWALDQEEAVKQSASAIEAVQNTREETAASRALAEEALQAILGESTSAVVHQPIESIFEVAVSPGLANKKFTPVQMTTLAEVVGEKGTMEYTPDHQIKLQIPTAHPDMIIEKLQAASFLLSPVGDVFTIKACDFCDGEKSDAIPHTEELQKRLGGMDMPKELKLGINGCGMACYGAVQEDIGIVYRKGAFDLFLGAKTVGRNAHSGQIVAEGIAPDDIVEIVENIIHEYKEKGHPNERFHKFFKRVKNVYGFDYQDITPKIKVEPAPCGD.

The [4Fe-4S] cluster site is built by Cys-402, Cys-405, Cys-439, and Cys-443.

In the N-terminal section; belongs to the precorrin methyltransferase family. The cofactor is [4Fe-4S] cluster.

The enzyme catalyses Co(II)-factor III + AH2 + S-adenosyl-L-methionine = Co-precorrin-4 + A + S-adenosyl-L-homocysteine. It functions in the pathway cofactor biosynthesis; adenosylcobalamin biosynthesis. Its function is as follows. Methyltransferase that catalyzes the reduction, ring contraction and methylation of C-17 in cobalt-factor III to form cobalt-precorrin-4. Is also able to convert cobalt-precorrin-3 to cobalt-precorrin-4. The chain is Cobalt-factor III methyltransferase (cbiH60) from Priestia megaterium (Bacillus megaterium).